Consider the following 340-residue polypeptide: Speriolin-like protein (340 aa).

Disordered regions lie at residues 42–73 (GGGH…RFTS) and 94–135 (APLS…KLSP). Ser-60 carries the phosphoserine modification. Positions 123-133 (PHSHRGTDRKL) are enriched in basic and acidic residues. Residue Ser-134 is modified to Phosphoserine.

It belongs to the speriolin family.

The protein localises to the cytoplasm. This Homo sapiens (Human) protein is Speriolin-like protein (SPATC1L).